The primary structure comprises 609 residues: NADH-ubiquinone oxidoreductase chain 5 (609 aa).

16 consecutive transmembrane segments (helical) span residues 3–23 (VINLFASSIITTLSMLTLPIV), 41–61 (TAISYAFMISMIPTTMFIYSG), 90–110 (MIFVPVALFVTWSIMEFSMWY), 115–135 (PFINRFFKYLLMFLITMMILV), 140–160 (LFQLFIGWEGVGIMSFLLIGW), 174–194 (AVLYNRIGDVGFIMAMAWFLI), 214–236 (VPLMGLLLAATGKSAQFGLHPWL), 244–264 (TPVSALLHSSTMVVAGVFLLI), 276–296 (MQTTTLCLGAITTLFTAICAL), 304–323 (IIAFSTSSQLGLMIVTIGIN), 328–350 (AFLHICTHAFFKAMLFLCSGSII), 368–388 (VLPFTTTSLIVGSLALTGMPF), 410–432 (WALLLTLVATSMTAAYSTRIMFF), 460–480 (LLLGSIFAGYLISYNITPTST), 491–511 (LMALTVTLLGFILALELNLTS), and 585–605 (GLIKLYFLSFIITLILALMMI).

The protein belongs to the complex I subunit 5 family. In terms of assembly, core subunit of respiratory chain NADH dehydrogenase (Complex I) which is composed of 45 different subunits.

It is found in the mitochondrion inner membrane. The catalysed reaction is a ubiquinone + NADH + 5 H(+)(in) = a ubiquinol + NAD(+) + 4 H(+)(out). Functionally, core subunit of the mitochondrial membrane respiratory chain NADH dehydrogenase (Complex I) which catalyzes electron transfer from NADH through the respiratory chain, using ubiquinone as an electron acceptor. Essential for the catalytic activity and assembly of complex I. The polypeptide is NADH-ubiquinone oxidoreductase chain 5 (MT-ND5) (Halichoerus grypus (Gray seal)).